A 364-amino-acid chain; its full sequence is Doublecortin domain-containing protein 2C (364 aa).

Doublecortin domains follow at residues 16–98 and 136–217; these read KTIV…LDYI and RHIN…FPYW. Residues 233 to 255 form a disordered region; sequence VEKNSQRKKKVDSKGKEPCKYDG.

As to expression, expressed in testis and spermatozoa (at protein level).

Its subcellular location is the cell projection. It localises to the cilium. The protein resides in the flagellum. The protein localises to the cytoplasm. This chain is Doublecortin domain-containing protein 2C, found in Homo sapiens (Human).